Reading from the N-terminus, the 283-residue chain is Pantothenate synthetase (283 aa).

26-33 lines the ATP pocket; the sequence is MGNLHEGH. The Proton donor role is filled by His33. Gln57 lines the (R)-pantoate pocket. Beta-alanine is bound at residue Gln57. ATP is bound at residue 148-151; that stretch reads GKKD. Gln154 is a (R)-pantoate binding site. ATP is bound at residue 185 to 188; it reads LSSR.

It belongs to the pantothenate synthetase family. As to quaternary structure, homodimer.

Its subcellular location is the cytoplasm. It catalyses the reaction (R)-pantoate + beta-alanine + ATP = (R)-pantothenate + AMP + diphosphate + H(+). Its pathway is cofactor biosynthesis; (R)-pantothenate biosynthesis; (R)-pantothenate from (R)-pantoate and beta-alanine: step 1/1. Catalyzes the condensation of pantoate with beta-alanine in an ATP-dependent reaction via a pantoyl-adenylate intermediate. The sequence is that of Pantothenate synthetase from Polaromonas naphthalenivorans (strain CJ2).